Here is a 309-residue protein sequence, read N- to C-terminus: Protoheme IX farnesyltransferase (309 aa).

Helical transmembrane passes span 35 to 55 (IGIV…AFYF), 64 to 84 (LHLV…SCAI), 114 to 134 (VLWL…MTTV), 135 to 155 (TAAV…TLWT), 161 to 181 (INTV…WTAV), 187 to 207 (IVPL…FLAL), 231 to 251 (MTKR…FYLF), 253 to 273 (LGVP…LLGL), and 289 to 309 (FVYS…ATLW).

It belongs to the UbiA prenyltransferase family. Protoheme IX farnesyltransferase subfamily. In terms of assembly, interacts with CtaA.

It localises to the cell membrane. The catalysed reaction is heme b + (2E,6E)-farnesyl diphosphate + H2O = Fe(II)-heme o + diphosphate. It functions in the pathway porphyrin-containing compound metabolism; heme O biosynthesis; heme O from protoheme: step 1/1. Functionally, converts heme B (protoheme IX) to heme O by substitution of the vinyl group on carbon 2 of heme B porphyrin ring with a hydroxyethyl farnesyl side group. The protein is Protoheme IX farnesyltransferase of Geobacillus kaustophilus (strain HTA426).